We begin with the raw amino-acid sequence, 613 residues long: Methionine--tRNA ligase (613 aa).

Residues 15–25 (PYANGPRHIGH) carry the 'HIGH' region motif. Positions 147, 150, 160, and 163 each coordinate Zn(2+). The short motif at 351–355 (KFSSS) is the 'KMSKS' region element. An ATP-binding site is contributed by serine 354.

It belongs to the class-I aminoacyl-tRNA synthetase family. MetG type 1 subfamily. In terms of assembly, monomer. It depends on Zn(2+) as a cofactor.

Its subcellular location is the cytoplasm. The catalysed reaction is tRNA(Met) + L-methionine + ATP = L-methionyl-tRNA(Met) + AMP + diphosphate. In terms of biological role, is required not only for elongation of protein synthesis but also for the initiation of all mRNA translation through initiator tRNA(fMet) aminoacylation. The chain is Methionine--tRNA ligase from Corynebacterium efficiens (strain DSM 44549 / YS-314 / AJ 12310 / JCM 11189 / NBRC 100395).